Consider the following 160-residue polypeptide: Dihydrofolate reductase (160 aa).

In terms of domain architecture, DHFR spans 1–160 (MLIAIWAMTQ…NVNYYRKKQQ (160 aa)). Position 5 to 7 (5 to 7 (IWA)) interacts with substrate. Residues 6-7 (WA) and 14-19 (IGNNNT) contribute to the NADP(+) site. Glu27 is a substrate binding site. An NADP(+)-binding site is contributed by 43–46 (GRKT). Arg57 is a binding site for substrate. NADP(+)-binding positions include 62–65 (LSKD) and 101–106 (CGGKSV). Ser120 lines the substrate pocket.

The protein belongs to the dihydrofolate reductase family.

It carries out the reaction (6S)-5,6,7,8-tetrahydrofolate + NADP(+) = 7,8-dihydrofolate + NADPH + H(+). It participates in cofactor biosynthesis; tetrahydrofolate biosynthesis; 5,6,7,8-tetrahydrofolate from 7,8-dihydrofolate: step 1/1. In terms of biological role, key enzyme in folate metabolism. Catalyzes an essential reaction for de novo glycine and purine synthesis, and for DNA precursor synthesis. In Mycoplasma genitalium (strain ATCC 33530 / DSM 19775 / NCTC 10195 / G37) (Mycoplasmoides genitalium), this protein is Dihydrofolate reductase (folA).